The chain runs to 834 residues: Inner nuclear membrane protein SRC1 (834 aa).

Residues 68-292 (DEGIVKMDRP…TANGTGHSTP (225 aa)) are disordered. Residues 77-86 (PSSSPSIASP) are compositionally biased toward low complexity. Serine 78, serine 80, and serine 85 each carry phosphoserine. Composition is skewed to acidic residues over residues 114–127 (VSND…DDDD) and 142–153 (DTDEVDDEEDDV). Polar residues predominate over residues 154–170 (ITSSSNKSDTNDFQQNS). Serine 181 carries the post-translational modification Phosphoserine. Over residues 188–198 (NSKENKIDNKH) the composition is skewed to basic and acidic residues. Serine 203, serine 204, and serine 206 each carry phosphoserine. The span at 243–266 (IKNTNRKPVSMDNFNDSLTSSGTE) shows a compositional bias: polar residues. Serine 301 carries the post-translational modification Phosphoserine. A disordered region spans residues 307–364 (PQKEVPSTILVPEVEQQEPSQSERTPSLFSSEGSGSESEAPLLPEITTPGPHQPMGNT). 2 stretches are compositionally biased toward low complexity: residues 317–329 (VPEV…SQSE) and 336–345 (SSEGSGSESE). Threonine 394 carries the post-translational modification Phosphothreonine. Serine 427 is subject to Phosphoserine. Helical transmembrane passes span 455–475 (LLAL…GLWY) and 708–728 (IWLM…LKNY).

It localises to the nucleus inner membrane. Its function is as follows. Plays a role in sister chromatid separation. This is Inner nuclear membrane protein SRC1 (SRC1) from Saccharomyces cerevisiae (strain ATCC 204508 / S288c) (Baker's yeast).